The following is a 415-amino-acid chain: Plasminogen activator inhibitor 2 (415 aa).

A disulfide bridge connects residues Cys5 and Cys405. Asn75, Asn115, and Asn339 each carry an N-linked (GlcNAc...) asparagine glycan.

Belongs to the serpin family. Ov-serpin subfamily. Interacts with PSMB1. In terms of processing, the signal sequence is not cleaved.

The protein localises to the cytoplasm. It is found in the secreted. The protein resides in the extracellular space. Its function is as follows. Inhibits urokinase-type plasminogen activator. The monocyte derived PAI-2 is distinct from the endothelial cell-derived PAI-1. In Homo sapiens (Human), this protein is Plasminogen activator inhibitor 2 (SERPINB2).